A 279-amino-acid chain; its full sequence is Protease HtpX homolog (279 aa).

The next 2 membrane-spanning stretches (helical) occupy residues 6 to 26 and 28 to 48; these read TVALMTVLTLLLVWAGGMMGG and GGALFALIMAAVMNLGSYWFS. Zn(2+) is bound at residue H127. The active site involves E128. H131 lines the Zn(2+) pocket. 2 helical membrane passes run 137–157 and 177–197; these read ILIGSIAATIAGAISYLAHMA and LGLLLLIIFAPLAAMLVQMAI. E202 contacts Zn(2+).

It belongs to the peptidase M48B family. Zn(2+) serves as cofactor.

Its subcellular location is the cell inner membrane. The polypeptide is Protease HtpX homolog (Syntrophotalea carbinolica (strain DSM 2380 / NBRC 103641 / GraBd1) (Pelobacter carbinolicus)).